The chain runs to 298 residues: Protoheme IX farnesyltransferase (298 aa).

9 helical membrane passes run 26-46 (VVSL…PGVV), 52-72 (IFAT…NCLV), 99-119 (FVFL…LVNP), 120-140 (LTMW…TVIL), 148-168 (IVIG…AVTG), 174-194 (ALLL…ALAL), 219-239 (LHVL…YATQ), 241-261 (SGLI…YYAV), and 276-296 (FRYS…DHYI).

Belongs to the UbiA prenyltransferase family. Protoheme IX farnesyltransferase subfamily.

The protein localises to the cell inner membrane. It catalyses the reaction heme b + (2E,6E)-farnesyl diphosphate + H2O = Fe(II)-heme o + diphosphate. The protein operates within porphyrin-containing compound metabolism; heme O biosynthesis; heme O from protoheme: step 1/1. Functionally, converts heme B (protoheme IX) to heme O by substitution of the vinyl group on carbon 2 of heme B porphyrin ring with a hydroxyethyl farnesyl side group. In Nitrosospira multiformis (strain ATCC 25196 / NCIMB 11849 / C 71), this protein is Protoheme IX farnesyltransferase.